Here is a 115-residue protein sequence, read N- to C-terminus: Ribonuclease P protein component (115 aa).

The protein belongs to the RnpA family. As to quaternary structure, consists of a catalytic RNA component (M1 or rnpB) and a protein subunit.

The enzyme catalyses Endonucleolytic cleavage of RNA, removing 5'-extranucleotides from tRNA precursor.. Functionally, RNaseP catalyzes the removal of the 5'-leader sequence from pre-tRNA to produce the mature 5'-terminus. It can also cleave other RNA substrates such as 4.5S RNA. The protein component plays an auxiliary but essential role in vivo by binding to the 5'-leader sequence and broadening the substrate specificity of the ribozyme. The protein is Ribonuclease P protein component of Blochmanniella pennsylvanica (strain BPEN).